The following is a 76-amino-acid chain: High-potential iron-sulfur protein isozyme 2 (76 aa).

[4Fe-4S] cluster contacts are provided by cysteine 38, cysteine 41, cysteine 54, and cysteine 70.

Belongs to the high-potential iron-sulfur protein (HiPIP) family. Homodimer.

Its function is as follows. Specific class of high-redox-potential 4Fe-4S ferredoxins. Functions in anaerobic electron transport in most purple and in some other photosynthetic bacteria and in at least one genus (Paracoccus) of halophilic, denitrifying bacteria. This Halorhodospira halophila (Ectothiorhodospira halophila) protein is High-potential iron-sulfur protein isozyme 2 (hip2).